The sequence spans 294 residues: NAD kinase (294 aa).

D74 (proton acceptor) is an active-site residue. Residues 74 to 75 (DG), 148 to 149 (NE), H159, R176, D178, 189 to 194 (TAYSLS), and Q249 each bind NAD(+).

Belongs to the NAD kinase family. Requires a divalent metal cation as cofactor.

It localises to the cytoplasm. It catalyses the reaction NAD(+) + ATP = ADP + NADP(+) + H(+). In terms of biological role, involved in the regulation of the intracellular balance of NAD and NADP, and is a key enzyme in the biosynthesis of NADP. Catalyzes specifically the phosphorylation on 2'-hydroxyl of the adenosine moiety of NAD to yield NADP. This chain is NAD kinase, found in Vibrio campbellii (strain ATCC BAA-1116).